The sequence spans 218 residues: Large ribosomal subunit protein bL25 (218 aa).

Positions 185–218 are disordered; it reads ARAAEEEAPAAEETTAEPELVRERREPRAEEEEE. Over residues 190–200 the composition is skewed to acidic residues; sequence EEAPAAEETTA. Residues 203 to 212 show a composition bias toward basic and acidic residues; the sequence is ELVRERREPR.

The protein belongs to the bacterial ribosomal protein bL25 family. CTC subfamily. Part of the 50S ribosomal subunit; part of the 5S rRNA/L5/L18/L25 subcomplex. Contacts the 5S rRNA. Binds to the 5S rRNA independently of L5 and L18.

This is one of the proteins that binds to the 5S RNA in the ribosome where it forms part of the central protuberance. The protein is Large ribosomal subunit protein bL25 of Roseiflexus castenholzii (strain DSM 13941 / HLO8).